The primary structure comprises 451 residues: Bifunctional protein GlmU (451 aa).

The tract at residues 1-229 (MQRHAIILAA…FDEIIGVNDR (229 aa)) is pyrophosphorylase. Residues 8–11 (LAAG), lysine 22, glutamine 72, and 77–78 (GT) each bind UDP-N-acetyl-alpha-D-glucosamine. Aspartate 102 provides a ligand contact to Mg(2+). Residues glycine 139, glutamate 154, and asparagine 227 each coordinate UDP-N-acetyl-alpha-D-glucosamine. Asparagine 227 contacts Mg(2+). The tract at residues 230 to 250 (LMLSEAEKALQQRINRYHMEN) is linker. The N-acetyltransferase stretch occupies residues 251-451 (GVTIIDPSST…QVNKEGYLKK (201 aa)). UDP-N-acetyl-alpha-D-glucosamine contacts are provided by arginine 332 and lysine 350. The active-site Proton acceptor is the histidine 362. Positions 365 and 376 each coordinate UDP-N-acetyl-alpha-D-glucosamine. Acetyl-CoA is bound by residues 385 to 386 (NY), alanine 422, and arginine 439.

The protein in the N-terminal section; belongs to the N-acetylglucosamine-1-phosphate uridyltransferase family. It in the C-terminal section; belongs to the transferase hexapeptide repeat family. As to quaternary structure, homotrimer. Requires Mg(2+) as cofactor.

It is found in the cytoplasm. It carries out the reaction alpha-D-glucosamine 1-phosphate + acetyl-CoA = N-acetyl-alpha-D-glucosamine 1-phosphate + CoA + H(+). The enzyme catalyses N-acetyl-alpha-D-glucosamine 1-phosphate + UTP + H(+) = UDP-N-acetyl-alpha-D-glucosamine + diphosphate. It participates in nucleotide-sugar biosynthesis; UDP-N-acetyl-alpha-D-glucosamine biosynthesis; N-acetyl-alpha-D-glucosamine 1-phosphate from alpha-D-glucosamine 6-phosphate (route II): step 2/2. Its pathway is nucleotide-sugar biosynthesis; UDP-N-acetyl-alpha-D-glucosamine biosynthesis; UDP-N-acetyl-alpha-D-glucosamine from N-acetyl-alpha-D-glucosamine 1-phosphate: step 1/1. The protein operates within bacterial outer membrane biogenesis; LPS lipid A biosynthesis. Its function is as follows. Catalyzes the last two sequential reactions in the de novo biosynthetic pathway for UDP-N-acetylglucosamine (UDP-GlcNAc). The C-terminal domain catalyzes the transfer of acetyl group from acetyl coenzyme A to glucosamine-1-phosphate (GlcN-1-P) to produce N-acetylglucosamine-1-phosphate (GlcNAc-1-P), which is converted into UDP-GlcNAc by the transfer of uridine 5-monophosphate (from uridine 5-triphosphate), a reaction catalyzed by the N-terminal domain. The chain is Bifunctional protein GlmU from Staphylococcus epidermidis (strain ATCC 35984 / DSM 28319 / BCRC 17069 / CCUG 31568 / BM 3577 / RP62A).